Here is a 223-residue protein sequence, read N- to C-terminus: Endonuclease V (223 aa).

Positions 35 and 103 each coordinate Mg(2+).

This sequence belongs to the endonuclease V family. The cofactor is Mg(2+).

The protein localises to the cytoplasm. It carries out the reaction Endonucleolytic cleavage at apurinic or apyrimidinic sites to products with a 5'-phosphate.. DNA repair enzyme involved in the repair of deaminated bases. Selectively cleaves double-stranded DNA at the second phosphodiester bond 3' to a deoxyinosine leaving behind the intact lesion on the nicked DNA. This chain is Endonuclease V, found in Salmonella enteritidis PT4 (strain P125109).